Here is a 656-residue protein sequence, read N- to C-terminus: DNA ligase (656 aa).

Residues 32–36 and 81–82 contribute to the NAD(+) site; these read DAVYD and SL. The active-site N6-AMP-lysine intermediate is the Lys-112. NAD(+) contacts are provided by Arg-133, Glu-167, and Lys-306. Residues Cys-400, Cys-403, Cys-416, and Cys-421 each coordinate Zn(2+). The BRCT domain occupies 577 to 656; the sequence is ESSSVFSNKT…ELLKRLKEFD (80 aa).

Belongs to the NAD-dependent DNA ligase family. LigA subfamily. The cofactor is Mg(2+). Mn(2+) serves as cofactor.

It carries out the reaction NAD(+) + (deoxyribonucleotide)n-3'-hydroxyl + 5'-phospho-(deoxyribonucleotide)m = (deoxyribonucleotide)n+m + AMP + beta-nicotinamide D-nucleotide.. Functionally, DNA ligase that catalyzes the formation of phosphodiester linkages between 5'-phosphoryl and 3'-hydroxyl groups in double-stranded DNA using NAD as a coenzyme and as the energy source for the reaction. It is essential for DNA replication and repair of damaged DNA. The sequence is that of DNA ligase from Helicobacter pylori (strain Shi470).